A 277-amino-acid polypeptide reads, in one-letter code: 3-methyl-2-oxobutanoate hydroxymethyltransferase (277 aa).

The Mg(2+) site is built by D43 and D82. 3-methyl-2-oxobutanoate is bound by residues 43-44 (DS), D82, and K112. Mg(2+) is bound at residue E114. E181 acts as the Proton acceptor in catalysis.

This sequence belongs to the PanB family. Homodecamer; pentamer of dimers. It depends on Mg(2+) as a cofactor.

Its subcellular location is the cytoplasm. It catalyses the reaction 3-methyl-2-oxobutanoate + (6R)-5,10-methylene-5,6,7,8-tetrahydrofolate + H2O = 2-dehydropantoate + (6S)-5,6,7,8-tetrahydrofolate. It participates in cofactor biosynthesis; (R)-pantothenate biosynthesis; (R)-pantoate from 3-methyl-2-oxobutanoate: step 1/2. In terms of biological role, catalyzes the reversible reaction in which hydroxymethyl group from 5,10-methylenetetrahydrofolate is transferred onto alpha-ketoisovalerate to form ketopantoate. The sequence is that of 3-methyl-2-oxobutanoate hydroxymethyltransferase from Listeria monocytogenes serotype 4b (strain CLIP80459).